A 97-amino-acid chain; its full sequence is Histone H1.C2 (97 aa).

Residues 24-97 (AAVPPKKAAP…KKAVKKAPKK (74 aa)) are disordered. The segment covering 31 to 97 (AAPKKAVAKK…KKAVKKAPKK (67 aa)) has biased composition (basic residues).

Its subcellular location is the nucleus. It is found in the chromosome. This Trypanosoma cruzi protein is Histone H1.C2.